A 394-amino-acid chain; its full sequence is Phosphoglycerate kinase (394 aa).

Residues 21 to 23 (DFN), Arg36, 59 to 62 (HLGR), Arg118, and Arg151 contribute to the substrate site. A Phosphoserine modification is found at Ser183. ATP is bound at residue Lys201. Thr299 carries the post-translational modification Phosphothreonine. ATP is bound by residues Glu323 and 350-353 (GGDS).

Belongs to the phosphoglycerate kinase family. In terms of assembly, monomer.

The protein localises to the cytoplasm. The enzyme catalyses (2R)-3-phosphoglycerate + ATP = (2R)-3-phospho-glyceroyl phosphate + ADP. Its pathway is carbohydrate degradation; glycolysis; pyruvate from D-glyceraldehyde 3-phosphate: step 2/5. The chain is Phosphoglycerate kinase from Shouchella clausii (strain KSM-K16) (Alkalihalobacillus clausii).